Here is a 280-residue protein sequence, read N- to C-terminus: Putative pyruvate, phosphate dikinase regulatory protein (280 aa).

Gly154–Thr161 is a binding site for ADP.

This sequence belongs to the pyruvate, phosphate/water dikinase regulatory protein family. PDRP subfamily.

It catalyses the reaction N(tele)-phospho-L-histidyl/L-threonyl-[pyruvate, phosphate dikinase] + ADP = N(tele)-phospho-L-histidyl/O-phospho-L-threonyl-[pyruvate, phosphate dikinase] + AMP + H(+). It carries out the reaction N(tele)-phospho-L-histidyl/O-phospho-L-threonyl-[pyruvate, phosphate dikinase] + phosphate + H(+) = N(tele)-phospho-L-histidyl/L-threonyl-[pyruvate, phosphate dikinase] + diphosphate. Its function is as follows. Bifunctional serine/threonine kinase and phosphorylase involved in the regulation of the pyruvate, phosphate dikinase (PPDK) by catalyzing its phosphorylation/dephosphorylation. This is Putative pyruvate, phosphate dikinase regulatory protein from Nitrobacter winogradskyi (strain ATCC 25391 / DSM 10237 / CIP 104748 / NCIMB 11846 / Nb-255).